The chain runs to 674 residues: Death-associated protein kinase related (674 aa).

The 259-residue stretch at 37–295 (EVEQTPFARG…ATGCLDHIWL (259 aa)) folds into the Protein kinase domain. ATP contacts are provided by residues 43 to 51 (FARGKFAAV) and Lys66. The active-site Proton acceptor is Asp160. 4 disordered regions span residues 308–388 (QPQS…GGSI), 412–440 (TLTS…SDKE), 511–583 (DSSG…TSGS), and 614–650 (TSSA…HHHV). Residues 312 to 343 (DAEEEEEEDVDDDVEDEEEEEQVEEEEEETQN) are compositionally biased toward acidic residues. Low complexity predominate over residues 352-363 (PQQQQQPVQQHQ). The segment covering 373–382 (KPTHNGHHRA) has biased composition (basic residues). Phosphoserine occurs at positions 384, 387, 435, 437, and 521. The segment covering 512-525 (SSGSAVARRSGGAV) has biased composition (low complexity). 2 stretches are compositionally biased toward polar residues: residues 526–541 (TSSS…SVRL) and 555–564 (YKKQTSQNGC). Low complexity-rich tracts occupy residues 565–583 (SSTS…TSGS) and 614–631 (TSSA…TSAA). A compositionally biased stretch (basic residues) spans 632–650 (HHLHHHHMHHHHHHHHHHV).

This sequence belongs to the protein kinase superfamily. Ser/Thr protein kinase family.

It catalyses the reaction L-seryl-[protein] + ATP = O-phospho-L-seryl-[protein] + ADP + H(+). The enzyme catalyses L-threonyl-[protein] + ATP = O-phospho-L-threonyl-[protein] + ADP + H(+). This Drosophila melanogaster (Fruit fly) protein is Death-associated protein kinase related (Drak).